The chain runs to 185 residues: Large ribosomal subunit protein uL5 (185 aa).

Belongs to the universal ribosomal protein uL5 family. Part of the 50S ribosomal subunit; part of the 5S rRNA/L5/L18/L25 subcomplex. Contacts the 5S rRNA and the P site tRNA. Forms a bridge to the 30S subunit in the 70S ribosome.

Its function is as follows. This is one of the proteins that bind and probably mediate the attachment of the 5S RNA into the large ribosomal subunit, where it forms part of the central protuberance. In the 70S ribosome it contacts protein S13 of the 30S subunit (bridge B1b), connecting the 2 subunits; this bridge is implicated in subunit movement. Contacts the P site tRNA; the 5S rRNA and some of its associated proteins might help stabilize positioning of ribosome-bound tRNAs. In Rhizobium johnstonii (strain DSM 114642 / LMG 32736 / 3841) (Rhizobium leguminosarum bv. viciae), this protein is Large ribosomal subunit protein uL5.